We begin with the raw amino-acid sequence, 420 residues long: Glucose-1-phosphate adenylyltransferase (420 aa).

Alpha-D-glucose 1-phosphate is bound by residues Y107, G172, 187-188 (EK), and S205.

Belongs to the bacterial/plant glucose-1-phosphate adenylyltransferase family. Homotetramer.

The catalysed reaction is alpha-D-glucose 1-phosphate + ATP + H(+) = ADP-alpha-D-glucose + diphosphate. It functions in the pathway glycan biosynthesis; glycogen biosynthesis. Involved in the biosynthesis of ADP-glucose, a building block required for the elongation reactions to produce glycogen. Catalyzes the reaction between ATP and alpha-D-glucose 1-phosphate (G1P) to produce pyrophosphate and ADP-Glc. This Rhizobium rhizogenes (strain K84 / ATCC BAA-868) (Agrobacterium radiobacter) protein is Glucose-1-phosphate adenylyltransferase.